We begin with the raw amino-acid sequence, 223 residues long: 2-C-methyl-D-erythritol 4-phosphate cytidylyltransferase (223 aa).

The protein belongs to the IspD/TarI cytidylyltransferase family. IspD subfamily.

The catalysed reaction is 2-C-methyl-D-erythritol 4-phosphate + CTP + H(+) = 4-CDP-2-C-methyl-D-erythritol + diphosphate. The protein operates within isoprenoid biosynthesis; isopentenyl diphosphate biosynthesis via DXP pathway; isopentenyl diphosphate from 1-deoxy-D-xylulose 5-phosphate: step 2/6. Catalyzes the formation of 4-diphosphocytidyl-2-C-methyl-D-erythritol from CTP and 2-C-methyl-D-erythritol 4-phosphate (MEP). In Prochlorococcus marinus subsp. pastoris (strain CCMP1986 / NIES-2087 / MED4), this protein is 2-C-methyl-D-erythritol 4-phosphate cytidylyltransferase.